A 747-amino-acid chain; its full sequence is Elongation factor G, mitochondrial (747 aa).

Residues 1–32 constitute a mitochondrion transit peptide; it reads MTLITRVLNSNLPLRLSALKTVRQLQCGYSSH. The 278-residue stretch at 42–319 folds into the tr-type G domain; sequence ERIRNIGISA…AIIDYLPNPG (278 aa). Residues 51–58, 118–122, and 172–175 each bind GTP; these read AHIDSGKT, DTPGH, and NKLD.

It belongs to the TRAFAC class translation factor GTPase superfamily. Classic translation factor GTPase family. EF-G/EF-2 subfamily.

Its subcellular location is the mitochondrion. It participates in protein biosynthesis; polypeptide chain elongation. Functionally, mitochondrial GTPase that catalyzes the GTP-dependent ribosomal translocation step during translation elongation. During this step, the ribosome changes from the pre-translocational (PRE) to the post-translocational (POST) state as the newly formed A-site-bound peptidyl-tRNA and P-site-bound deacylated tRNA move to the P and E sites, respectively. Catalyzes the coordinated movement of the two tRNA molecules, the mRNA and conformational changes in the ribosome. Essential during development as it acts as a retrograde signal from mitochondria to the nucleus to slow down cell proliferation if mitochondrial energy output is low. This Drosophila virilis (Fruit fly) protein is Elongation factor G, mitochondrial.